Here is a 100-residue protein sequence, read N- to C-terminus: Small ribosomal subunit protein uS14 (100 aa).

It belongs to the universal ribosomal protein uS14 family. As to quaternary structure, part of the 30S ribosomal subunit. Contacts proteins S3 and S10.

Its function is as follows. Binds 16S rRNA, required for the assembly of 30S particles and may also be responsible for determining the conformation of the 16S rRNA at the A site. The sequence is that of Small ribosomal subunit protein uS14 from Thermosynechococcus vestitus (strain NIES-2133 / IAM M-273 / BP-1).